Reading from the N-terminus, the 412-residue chain is Histone-lysine N-methyltransferase SUV39H1 (412 aa).

Residues 1–89 (MAENLKGCSV…LKCIRVLKQF (89 aa)) form an interaction with SIRT1 region. A Chromo domain is found at 43–101 (FEVEYLCDYKKIREQEYYLVKWRGYPDSENTWEPRQNLKCIRVLKQFHKDLERELVRRH). The Pre-SET domain occupies 179–240 (VGCECQDCLL…DCPNRVVQKG (62 aa)). Zn(2+) contacts are provided by Cys181, Cys183, Cys186, Cys194, Cys195, Cys222, Cys226, Cys228, and Cys232. Residues 243-366 (YDLCIFRTND…AGEELTFDYN (124 aa)) enclose the SET domain. Position 254–256 (254–256 (RGW)) interacts with S-adenosyl-L-methionine. Residues 255 to 377 (GWGVRTLEKI…QVDPVDMEST (123 aa)) are mediates interaction with MECOM. The residue at position 266 (Lys266) is an N6-acetyllysine. Residues Tyr297 and 323 to 324 (NH) contribute to the S-adenosyl-L-methionine site. A Zn(2+)-binding site is contributed by Cys326. Ser391 carries the phosphoserine modification. Residues 396–412 (VRIECKCGTTACRKYLF) enclose the Post-SET domain. Zn(2+) is bound by residues Cys400, Cys402, and Cys407.

Belongs to the class V-like SAM-binding methyltransferase superfamily. Histone-lysine methyltransferase family. Suvar3-9 subfamily. In terms of assembly, interacts with CCAR2 and GFI1B. Component of the eNoSC complex, composed of SIRT1, SUV39H1 and RRP8. Interacts with H3 and H4 histones. Interacts with DNMT3B, CBX1, CBX4, MBD1, RUNX1, RUNX3, MYOD1, SMAD5 and RB1. Interacts with SBF1 through the SET domain. Interacts with HDAC1 and HDAC2 through the N-terminus and associates with the core histone deacetylase complex composed of HDAC1, HDAC2, RBBP4 and RBBP7. Interacts (via SET domain) with MECOM; enhances MECOM transcriptional repression activity. Interacts with LMNA; the interaction increases stability of SUV39H1. The large PER complex involved in the histone methylation is composed of at least PER2, CBX3, TRIM28, SUV39H1 and/or SUV39H2; CBX3 mediates the formation of the complex. In terms of processing, phosphorylated on serine residues, and to a lesser degree, on threonine residues. Acetylated at Lys-266, leading to inhibition of enzyme activity. SIRT1-mediated deacetylation relieves this inhibition. Post-translationally, ubiquitinated by the DCX(DCAF13) E3 ubiquitin ligase complex, leading to its degradation. Widely expressed.

It localises to the nucleus. The protein resides in the nucleus lamina. Its subcellular location is the nucleoplasm. The protein localises to the chromosome. It is found in the centromere. It catalyses the reaction L-lysyl(9)-[histone H3] + 3 S-adenosyl-L-methionine = N(6),N(6),N(6)-trimethyl-L-lysyl(9)-[histone H3] + 3 S-adenosyl-L-homocysteine + 3 H(+). Its activity is regulated as follows. Negatively regulated by CCAR2. Functionally, histone methyltransferase that specifically trimethylates 'Lys-9' of histone H3 using monomethylated H3 'Lys-9' as substrate. H3 'Lys-9' trimethylation represents a specific tag for epigenetic transcriptional repression by recruiting HP1 (CBX1, CBX3 and/or CBX5) proteins to methylated histones. Mainly functions in heterochromatin regions, thereby playing a central role in the establishment of constitutive heterochromatin at pericentric and telomere regions. H3 'Lys-9' trimethylation is also required to direct DNA methylation at pericentric repeats. SUV39H1 is targeted to histone H3 via its interaction with RB1 and is involved in many processes, such as repression of MYOD1-stimulated differentiation, regulation of the control switch for exiting the cell cycle and entering differentiation, repression by the PML-RARA fusion protein, BMP-induced repression, repression of switch recombination to IgA and regulation of telomere length. Component of the eNoSC (energy-dependent nucleolar silencing) complex, a complex that mediates silencing of rDNA in response to intracellular energy status and acts by recruiting histone-modifying enzymes. The eNoSC complex is able to sense the energy status of cell: upon glucose starvation, elevation of NAD(+)/NADP(+) ratio activates SIRT1, leading to histone H3 deacetylation followed by dimethylation of H3 at 'Lys-9' (H3K9me2) by SUV39H1 and the formation of silent chromatin in the rDNA locus. Recruited by the PER complex to the E-box elements of the circadian target genes such as PER2 itself or PER1, contributes to the conversion of local chromatin to a heterochromatin-like repressive state through H3 'Lys-9' trimethylation. The protein is Histone-lysine N-methyltransferase SUV39H1 (Suv39h1) of Mus musculus (Mouse).